The following is a 77-amino-acid chain: MKEQKLIHEGLITESLPNGMFRVRLDNEDLILGYVSGRIRRSFIRILPGDRVKIEVSSYDSTKGRIIYRLRNKDSND.

Residues 1–71 (MKEQKLIHEG…TKGRIIYRLR (71 aa)) enclose the S1-like domain.

It belongs to the IF-1 family. Component of the 30S ribosomal translation pre-initiation complex which assembles on the 30S ribosome in the order IF-2 and IF-3, IF-1 and N-formylmethionyl-tRNA(fMet); mRNA recruitment can occur at any time during PIC assembly.

The protein resides in the plastid. The protein localises to the chloroplast. Functionally, one of the essential components for the initiation of protein synthesis. Stabilizes the binding of IF-2 and IF-3 on the 30S subunit to which N-formylmethionyl-tRNA(fMet) subsequently binds. Helps modulate mRNA selection, yielding the 30S pre-initiation complex (PIC). Upon addition of the 50S ribosomal subunit IF-1, IF-2 and IF-3 are released leaving the mature 70S translation initiation complex. In Drimys granadensis, this protein is Translation initiation factor IF-1, chloroplastic.